A 271-amino-acid polypeptide reads, in one-letter code: Oligodendrocyte transcription factor 1 (271 aa).

A disordered region spans residues 38–117 (YRQPPSSSSS…RKINSRERKR (80 aa)). A compositionally biased stretch (low complexity) spans 43 to 61 (SSSSSSTSSTSSTSSSSTT). The bHLH domain occupies 105–164 (QLRRKINSRERKRMQDLNLAMDALREVILPYSAAHCQGAPGRKLSKIATLLLARNYILLL).

In terms of tissue distribution, expressed in the brain, in oligodendrocytes. Strongly expressed in oligodendrogliomas, while expression is weak to moderate in astrocytomas. Expression in glioblastomas is highly variable.

The protein localises to the nucleus. In terms of biological role, promotes formation and maturation of oligodendrocytes, especially within the brain. Cooperates with OLIG2 to establish the pMN domain of the embryonic neural tube. The protein is Oligodendrocyte transcription factor 1 (OLIG1) of Homo sapiens (Human).